We begin with the raw amino-acid sequence, 217 residues long: Large ribosomal subunit protein uL3 (217 aa).

The segment covering 134 to 146 (GRATHGNSRSHNV) has biased composition (polar residues). The segment at 134 to 154 (GRATHGNSRSHNVPGSIGMAQ) is disordered. The residue at position 154 (Q154) is an N5-methylglutamine.

Belongs to the universal ribosomal protein uL3 family. In terms of assembly, part of the 50S ribosomal subunit. Forms a cluster with proteins L14 and L19. In terms of processing, methylated by PrmB.

One of the primary rRNA binding proteins, it binds directly near the 3'-end of the 23S rRNA, where it nucleates assembly of the 50S subunit. In Burkholderia cenocepacia (strain HI2424), this protein is Large ribosomal subunit protein uL3.